Reading from the N-terminus, the 360-residue chain is Probable ribonucleoside-diphosphate reductase small subunit 376L (360 aa).

The Fe cation site is built by Asp67, Glu98, and His101. The active site involves Tyr105. Fe cation contacts are provided by Glu172, Glu206, and His209.

The protein belongs to the ribonucleoside diphosphate reductase small chain family. In terms of assembly, heterotetramer composed of a homodimer of the large subunit (R1) and a homodimer of the small subunit (R2). Larger multisubunit protein complex are also active, composed of (R1)n(R2)n. The cofactor is Fe cation.

It catalyses the reaction a 2'-deoxyribonucleoside 5'-diphosphate + [thioredoxin]-disulfide + H2O = a ribonucleoside 5'-diphosphate + [thioredoxin]-dithiol. In terms of biological role, ribonucleoside-diphosphate reductase holoenzyme provides the precursors necessary for viral DNA synthesis. Allows virus growth in non-dividing cells. Catalyzes the biosynthesis of deoxyribonucleotides from the corresponding ribonucleotides. In Acheta domesticus (House cricket), this protein is Probable ribonucleoside-diphosphate reductase small subunit 376L.